A 115-amino-acid chain; its full sequence is Large ribosomal subunit protein uL22c (115 aa).

It belongs to the universal ribosomal protein uL22 family. Part of the 50S ribosomal subunit.

The protein resides in the plastid. It is found in the chloroplast. Its function is as follows. This protein binds specifically to 23S rRNA. In terms of biological role, the globular domain of the protein is located near the polypeptide exit tunnel on the outside of the subunit, while an extended beta-hairpin is found that lines the wall of the exit tunnel in the center of the 70S ribosome. In Phaeodactylum tricornutum (strain CCAP 1055/1), this protein is Large ribosomal subunit protein uL22c (rpl22).